A 443-amino-acid chain; its full sequence is ATP-dependent protease ATPase subunit HslU (443 aa).

Residues I19, G61 to E66, D256, E321, and R393 contribute to the ATP site.

This sequence belongs to the ClpX chaperone family. HslU subfamily. As to quaternary structure, a double ring-shaped homohexamer of HslV is capped on each side by a ring-shaped HslU homohexamer. The assembly of the HslU/HslV complex is dependent on binding of ATP.

It localises to the cytoplasm. ATPase subunit of a proteasome-like degradation complex; this subunit has chaperone activity. The binding of ATP and its subsequent hydrolysis by HslU are essential for unfolding of protein substrates subsequently hydrolyzed by HslV. HslU recognizes the N-terminal part of its protein substrates and unfolds these before they are guided to HslV for hydrolysis. This chain is ATP-dependent protease ATPase subunit HslU, found in Ralstonia pickettii (strain 12J).